Here is a 558-residue protein sequence, read N- to C-terminus: Polypeptide N-acetylgalactosaminyltransferase 16 (558 aa).

The Cytoplasmic segment spans residues 1–6 (MRKIRA). The chain crosses the membrane as a helical; Signal-anchor for type II membrane protein span at residues 7–26 (NAIAILTVAWILGTFYYLWQ). Residues 27–558 (DNRAHAASSG…AQQWQLLPHT (532 aa)) lie on the Lumenal side of the membrane. The disordered stretch occupies residues 33-54 (ASSGGRGAQRAGRRSEQLREDR). Positions 45 to 54 (RRSEQLREDR) are enriched in basic and acidic residues. Disulfide bonds link C113–C340, C331–C409, C441–C460, C486–C506, and C530–C543. Positions 122 to 227 (LPATSVIITF…TEWLPPMLQR (106 aa)) are catalytic subdomain A. 2 residues coordinate substrate: D163 and R188. Position 211 (D211) interacts with Mn(2+). S212 lines the substrate pocket. H213 contributes to the Mn(2+) binding site. The tract at residues 286–348 (PIRTPVIAGG…PCSRVGHVFR (63 aa)) is catalytic subdomain B. W317 provides a ligand contact to substrate. H345 is a Mn(2+) binding site. Substrate contacts are provided by R348, H351, and Y353. Residues 428–555 (KEALPGIIKQ…DAQAQQWQLL (128 aa)) enclose the Ricin B-type lectin domain.

This sequence belongs to the glycosyltransferase 2 family. GalNAc-T subfamily. The cofactor is Mn(2+).

The protein resides in the golgi apparatus membrane. The catalysed reaction is L-seryl-[protein] + UDP-N-acetyl-alpha-D-galactosamine = a 3-O-[N-acetyl-alpha-D-galactosaminyl]-L-seryl-[protein] + UDP + H(+). It carries out the reaction L-threonyl-[protein] + UDP-N-acetyl-alpha-D-galactosamine = a 3-O-[N-acetyl-alpha-D-galactosaminyl]-L-threonyl-[protein] + UDP + H(+). The protein operates within protein modification; protein glycosylation. Catalyzes the initial reaction in O-linked oligosaccharide biosynthesis, the transfer of an N-acetyl-D-galactosamine residue to a serine or threonine residue on the protein receptor. This Homo sapiens (Human) protein is Polypeptide N-acetylgalactosaminyltransferase 16 (GALNT16).